Here is a 67-residue protein sequence, read N- to C-terminus: Theromin (67 aa).

The 26-residue stretch at 2–27 (CENTECPRACPGEYEFDEDGCNTCVC) folds into the Antistasin-like domain.

In terms of assembly, homodimer. Eight disulfide bonds are present.

The protein resides in the secreted. Functionally, potent thrombin-specific inhibitor. The protein is Theromin of Theromyzon tessulatum (Duck leech).